Consider the following 177-residue polypeptide: HVA22-like protein a (177 aa).

Helical transmembrane passes span 18 to 38 (VLAG…QAIE), 47 to 67 (QWLT…TFAK), and 68 to 88 (LIEW…WLVI).

The protein belongs to the DP1 family. Predominantly expressed in flower buds and stem.

It localises to the membrane. The protein is HVA22-like protein a (HVA22A) of Arabidopsis thaliana (Mouse-ear cress).